Reading from the N-terminus, the 123-residue chain is Large ribosomal subunit protein uL14 (123 aa).

It belongs to the universal ribosomal protein uL14 family. In terms of assembly, part of the 50S ribosomal subunit. Forms a cluster with proteins L3 and L19. In the 70S ribosome, L14 and L19 interact and together make contacts with the 16S rRNA in bridges B5 and B8.

Binds to 23S rRNA. Forms part of two intersubunit bridges in the 70S ribosome. The protein is Large ribosomal subunit protein uL14 of Tropheryma whipplei (strain TW08/27) (Whipple's bacillus).